Consider the following 205-residue polypeptide: Holliday junction branch migration complex subunit RuvA (205 aa).

Residues 1 to 64 (MIGKLKGVID…EDQIKLFGFR (64 aa)) form a domain I region. Residues 65–143 (TDHEREWFRL…SFANVDPTVV (79 aa)) form a domain II region. The segment at 144–154 (HLAGDLDDQRA) is flexible linker. The domain III stretch occupies residues 154-205 (APRPVRDAISALVNLGYGQPQATAAIAAASRGAGENAETAQLIRLGLKELSK).

It belongs to the RuvA family. In terms of assembly, homotetramer. Forms an RuvA(8)-RuvB(12)-Holliday junction (HJ) complex. HJ DNA is sandwiched between 2 RuvA tetramers; dsDNA enters through RuvA and exits via RuvB. An RuvB hexamer assembles on each DNA strand where it exits the tetramer. Each RuvB hexamer is contacted by two RuvA subunits (via domain III) on 2 adjacent RuvB subunits; this complex drives branch migration. In the full resolvosome a probable DNA-RuvA(4)-RuvB(12)-RuvC(2) complex forms which resolves the HJ.

It localises to the cytoplasm. Functionally, the RuvA-RuvB-RuvC complex processes Holliday junction (HJ) DNA during genetic recombination and DNA repair, while the RuvA-RuvB complex plays an important role in the rescue of blocked DNA replication forks via replication fork reversal (RFR). RuvA specifically binds to HJ cruciform DNA, conferring on it an open structure. The RuvB hexamer acts as an ATP-dependent pump, pulling dsDNA into and through the RuvAB complex. HJ branch migration allows RuvC to scan DNA until it finds its consensus sequence, where it cleaves and resolves the cruciform DNA. The sequence is that of Holliday junction branch migration complex subunit RuvA from Nitrobacter winogradskyi (strain ATCC 25391 / DSM 10237 / CIP 104748 / NCIMB 11846 / Nb-255).